The following is a 379-amino-acid chain: Glucose-1-phosphate adenylyltransferase (379 aa).

Alpha-D-glucose 1-phosphate is bound by residues Gly164, 179-180 (EK), and Ser190.

This sequence belongs to the bacterial/plant glucose-1-phosphate adenylyltransferase family. As to quaternary structure, homotetramer.

It catalyses the reaction alpha-D-glucose 1-phosphate + ATP + H(+) = ADP-alpha-D-glucose + diphosphate. Its pathway is glycan biosynthesis; glycogen biosynthesis. Functionally, involved in the biosynthesis of ADP-glucose, a building block required for the elongation reactions to produce glycogen. Catalyzes the reaction between ATP and alpha-D-glucose 1-phosphate (G1P) to produce pyrophosphate and ADP-Glc. The chain is Glucose-1-phosphate adenylyltransferase from Streptococcus equi subsp. zooepidemicus (strain H70).